The primary structure comprises 258 residues: Axonemal dynein light intermediate polypeptide 1 (258 aa).

2 disordered regions span residues 1 to 60 (MIPP…CVPD) and 207 to 231 (VNEQ…EEKK). The span at 34-44 (SPQQPGPSGSA) shows a compositional bias: low complexity. Residues 176–255 (MRKALQAEQG…LKAQLEGIIA (80 aa)) are a coiled coil.

It belongs to the inner dynein arm light chain family. In terms of assembly, interacts with CFAP45. Interacts with DYNC1H1. In terms of tissue distribution, expressed in many tissues. A smaller 0.9 kb and a larger 2.5 kb transcripts were detected at the highest level in the testis, at medium levels in the prostate, heart, liver, lung and pancreas, at low levels in the ovary, skeletal muscle and small intestine. Not detected in spleen, colon epithelium, thymus or peripheral blood leukocytes. The 0.9 kb transcript is expressed at a 20-fold higher level than the 2.5 kb transcript in the testis. Expressed in spermatozoa and airway epithelial cells (at protein level).

It localises to the cell projection. It is found in the cilium. The protein localises to the flagellum. Its subcellular location is the dynein axonemal particle. The protein resides in the cytoplasm. In terms of biological role, involved in sperm flagellum assembly. This Homo sapiens (Human) protein is Axonemal dynein light intermediate polypeptide 1.